The following is a 553-amino-acid chain: Pseudouridylate synthase RPUSD2 (553 aa).

The disordered stretch occupies residues 76-135 (AVGKQVPESGDQAQGGEGQLPSNGEQTPAPVADSGKRKKRRGATGERVVPPPKKRRTGVS). Residue Asp287 is part of the active site. Thr490 is modified (phosphothreonine).

It belongs to the pseudouridine synthase RluA family.

It carries out the reaction a uridine in mRNA = a pseudouridine in mRNA. Its function is as follows. Pseudouridine synthase that catalyzes pseudouridylation of mRNAs. The sequence is that of Pseudouridylate synthase RPUSD2 from Mus musculus (Mouse).